The primary structure comprises 349 residues: UDP-N-acetylenolpyruvoylglucosamine reductase (349 aa).

One can recognise an FAD-binding PCMH-type domain in the interval 24-197 (FGIDATARFA…VAVTFRLPKR (174 aa)). R173 is an active-site residue. Catalysis depends on S249, which acts as the Proton donor. The active site involves E345.

This sequence belongs to the MurB family. Requires FAD as cofactor.

Its subcellular location is the cytoplasm. The enzyme catalyses UDP-N-acetyl-alpha-D-muramate + NADP(+) = UDP-N-acetyl-3-O-(1-carboxyvinyl)-alpha-D-glucosamine + NADPH + H(+). It functions in the pathway cell wall biogenesis; peptidoglycan biosynthesis. Functionally, cell wall formation. In Burkholderia ambifaria (strain MC40-6), this protein is UDP-N-acetylenolpyruvoylglucosamine reductase.